The following is a 174-amino-acid chain: Large ribosomal subunit protein uL10 (174 aa).

It belongs to the universal ribosomal protein uL10 family. Part of the ribosomal stalk of the 50S ribosomal subunit. The N-terminus interacts with L11 and the large rRNA to form the base of the stalk. The C-terminus forms an elongated spine to which L12 dimers bind in a sequential fashion forming a multimeric L10(L12)X complex.

In terms of biological role, forms part of the ribosomal stalk, playing a central role in the interaction of the ribosome with GTP-bound translation factors. This Geotalea uraniireducens (strain Rf4) (Geobacter uraniireducens) protein is Large ribosomal subunit protein uL10.